The sequence spans 294 residues: tRNA dimethylallyltransferase (294 aa).

10-17 (GPTAVGKT) lines the ATP pocket. 12-17 (TAVGKT) contacts substrate. Residues 35–38 (DSQQ) form an interaction with substrate tRNA region.

Belongs to the IPP transferase family. Monomer. Mg(2+) serves as cofactor.

It catalyses the reaction adenosine(37) in tRNA + dimethylallyl diphosphate = N(6)-dimethylallyladenosine(37) in tRNA + diphosphate. Functionally, catalyzes the transfer of a dimethylallyl group onto the adenine at position 37 in tRNAs that read codons beginning with uridine, leading to the formation of N6-(dimethylallyl)adenosine (i(6)A). The polypeptide is tRNA dimethylallyltransferase (Streptococcus suis (strain 98HAH33)).